The following is a 480-amino-acid chain: Type II methyltransferase M.NspV (480 aa).

This sequence belongs to the methyltransferase superfamily.

A gamma subtype methylase that recognizes the double-stranded sequence 5'-TTCGAA-3', and methylates it on an unknown base to protect it against the NspV endonuclease. The polypeptide is Type II methyltransferase M.NspV (Nostoc sp. (strain ATCC 29411 / PCC 7524)).